Consider the following 208-residue polypeptide: Large ribosomal subunit protein uL3 (208 aa).

This sequence belongs to the universal ribosomal protein uL3 family. As to quaternary structure, part of the 50S ribosomal subunit. Forms a cluster with proteins L14 and L19.

In terms of biological role, one of the primary rRNA binding proteins, it binds directly near the 3'-end of the 23S rRNA, where it nucleates assembly of the 50S subunit. This chain is Large ribosomal subunit protein uL3, found in Salinibacter ruber (strain DSM 13855 / M31).